Consider the following 350-residue polypeptide: Putative zinc metalloprotease jhp_0242 (350 aa).

A Zn(2+)-binding site is contributed by His-16. Glu-17 is an active-site residue. Zn(2+) is bound at residue His-20. Transmembrane regions (helical) follow at residues Trp-43–Val-63, Leu-94–Phe-114, Leu-249–Leu-269, Met-277–Ile-297, and Leu-326–Ile-346. One can recognise a PDZ domain in the interval Ala-108 to Asn-177.

This sequence belongs to the peptidase M50B family. It depends on Zn(2+) as a cofactor.

It localises to the cell inner membrane. The protein is Putative zinc metalloprotease jhp_0242 of Helicobacter pylori (strain J99 / ATCC 700824) (Campylobacter pylori J99).